A 25-amino-acid chain; its full sequence is Glutamine synthetase 2 isozyme (25 aa).

The protein belongs to the glutamine synthetase family. Homohexamer.

The protein localises to the plastid. It is found in the chloroplast. The enzyme catalyses L-glutamate + NH4(+) + ATP = L-glutamine + ADP + phosphate + H(+). In terms of biological role, plays a key role in the nitrogen metabolism of microorganisms, animals and plants. The sequence is that of Glutamine synthetase 2 isozyme from Emiliania huxleyi (Coccolithophore).